The following is a 904-amino-acid chain: Disks large homolog 1 (904 aa).

Positions 4–64 (RKQDTQRALH…FYEVTLLDNP (61 aa)) constitute an L27 domain. Position 115 is a phosphothreonine (threonine 115). Phosphoserine occurs at positions 122, 138, and 158. The tract at residues 162–212 (PTEAVLPSPPTVPVIPVLPVPAENTVILPTIPQANPPPVLVNTDSLETPTY) is interaction with SH3 domains. PDZ domains lie at 224–310 (EITL…VKRR), 319–405 (EIKL…VAKP), and 466–546 (KVVL…AQYR). The required for interaction with MARCHF2 stretch occupies residues 224–546 (EITLERGNSG…QAVTIVAQYR (323 aa)). Serine 232 is subject to Phosphoserine. Phosphotyrosine is present on tyrosine 399. Serine 568, serine 573, serine 575, serine 579, serine 598, serine 619, serine 676, serine 684, serine 687, glutamine 709, and serine 834 each carry phosphoserine. The SH3 domain maps to 581 to 651 (KRSLYVRALF…PSKRRVEKKE (71 aa)). A disordered region spans residues 662-693 (SKTRDKGEIPDDMGSKGLKHVTSNASDSESSY). A compositionally biased stretch (polar residues) spans 682–693 (VTSNASDSESSY). A Guanylate kinase-like domain is found at 714–889 (TRPVIILGPM…IYNQVKQIIE (176 aa)).

It belongs to the MAGUK family. Homotetramer. Interacts (via guanylate kinase-like domain) with DLGAP1, DLGAP2, DLGAP3, DLGAP4 and MAP1A. Interacts (via guanylate kinase-like domain) with KIF13B. May interact with HTR2A. Interacts (via PDZ domains) with GRIA1. Interacts (via PDZ domains) with GRIN2A. Interacts (via PDZ domains) with KCND2 and KCND3. Interacts (via PDZ domains) with KCNA1, KCNA2, KCNA3 and KCNA4. Interacts (via PDZ domains) with ADGRA3. Interacts with KCNF1. Interacts with CAMK2. Interacts with cytoskeleton-associated protein EPB41. Interacts with cytoskeleton-associated protein EZR. Found in a complex with KCNA5 and CAV3. Found in a complex with APC and CTNNB1. Interacts (via PDZ domains) with APC. Interacts with CDH1 through binding to PIK3R1. Forms multiprotein complexes with CASK, LIN7A, LIN7B, LIN7C, APBA1, and KCNJ12. Interacts with TOPK. Forms a tripartite complex composed of DLG1, MPP7 and LIN7 (LIN7A or LIN7C). May interact with TJAP1. Interacts with PTEN. Interacts with FRMPD4 (via C-terminus). Interacts with LRFN1, LRFN2 and LRFN4. Interacts with SFPQ. Interacts (via PDZ domains) with ADGRA2 (via PDZ-binding motif). Interacts with ADAM10; this interaction recruits ADAM10 to the cell membrane during long-term depression in hippocampal neurons. Interacts with DGKI (via PDZ-binding motif). Interacts (via PDZ domains) with MARCHF2 (via PDZ domain); the interaction leads to DLG1 ubiqtuitination and degradation. Interacts (via N-terminus) with MPP3; this interaction connects CADM1 with DLG1 and links CADM1 with the regulatory subunit of phosphoinositide-3-kinase (PI3K) by forming a multiprotein complex and participates in cell spreading. In terms of assembly, (Microbial infection) Interacts with HTLV-1 protein Tax. As to quaternary structure, (Microbial infection) Interacts (via PDZ domains 1 and 2) with influenza A virus protein NS1; the interaction results in the translocation of DLG1 from the cell membrane to perinuclear puncta. Acts as a scaffold protein to facilitate the interaction between LIN7C and influenza A virus protein NS1; the interaction facilitates translocation of LIN7C to cytoplasmic puncta. (Microbial infection) Interacts with human papillomavirus 18/HPV-18 protein E6. Phosphorylated by MAPK12. Phosphorylation of Ser-232 regulates association with GRIN2A. In terms of processing, ubiquitinated; by MARCHF2 which results in its degradation. Abundantly expressed in atrial myocardium (at protein level). Expressed in lung fibroblasts, cervical epithelial and B-cells (at protein level). Expressed in the brain (at protein level). Widely expressed, with isoforms displaying different expression profiles.

It localises to the cell membrane. The protein localises to the basolateral cell membrane. It is found in the endoplasmic reticulum membrane. The protein resides in the postsynaptic density. Its subcellular location is the synapse. It localises to the sarcolemma. The protein localises to the apical cell membrane. It is found in the cell junction. The protein resides in the cytoplasm. Essential multidomain scaffolding protein required for normal development. Recruits channels, receptors and signaling molecules to discrete plasma membrane domains in polarized cells. Promotes epithelial cell layer barrier function via maintaining cell-cell adhesion. May also play a role in adherens junction assembly, signal transduction, cell proliferation, synaptogenesis and lymphocyte activation. Regulates the excitability of cardiac myocytes by modulating the functional expression of Kv4 channels. Functional regulator of Kv1.5 channel. During long-term depression in hippocampal neurons, it recruits ADAM10 to the plasma membrane. This chain is Disks large homolog 1, found in Homo sapiens (Human).